Here is a 159-residue protein sequence, read N- to C-terminus: Endoribonuclease YbeY (159 aa).

The Zn(2+) site is built by His114, His118, and His124.

Belongs to the endoribonuclease YbeY family. It depends on Zn(2+) as a cofactor.

It is found in the cytoplasm. Its function is as follows. Single strand-specific metallo-endoribonuclease involved in late-stage 70S ribosome quality control and in maturation of the 3' terminus of the 16S rRNA. The sequence is that of Endoribonuclease YbeY from Pectobacterium carotovorum subsp. carotovorum (strain PC1).